Here is a 553-residue protein sequence, read N- to C-terminus: Mucolipin-3 (553 aa).

The Cytoplasmic portion of the chain corresponds to 1–62 (MANPEIVISS…FWARGRKPWK (62 aa)). The tract at residues 52–62 (KFWARGRKPWK) is interaction with phosphoinositides. A helical membrane pass occupies residues 63–83 (LAIQILKIAMVTIQLVLFGLS). The Extracellular segment spans residues 84–283 (NQMVVAFKEE…VSGSIQKNTH (200 aa)). Residues 104 to 118 (KGYIDRMDDTYAVYT) form an extracellular/lumenal pore loop region. N-linked (GlcNAc...) asparagine glycosylation occurs at asparagine 138. An intrachain disulfide couples cysteine 159 to cysteine 185. An N-linked (GlcNAc...) asparagine glycan is attached at asparagine 205. A disulfide bond links cysteine 238 and cysteine 269. The chain crosses the membrane as a helical span at residues 284–304 (NMMIFDAFVILTCLVSLILCI). Topologically, residues 305-341 (RSVISGLQLQQEFVNFFLLHYKKDVSVSDQMEFVNGW) are cytoplasmic. The chain crosses the membrane as a helical span at residues 342–362 (YIMIIISDILTIIGSILKMEI). Over 363-371 (QAKSLTSYD) the chain is Extracellular. Residues 372-392 (VCSILLGTSTMLVWLGVIRYL) form a helical membrane-spanning segment. Residues 393 to 414 (GFFAKYNLLILTLQAALPNVIR) lie on the Cytoplasmic side of the membrane. A helical membrane pass occupies residues 415–435 (FCCCAAMIYLGYCFCGWIVLG). The Extracellular segment spans residues 436-443 (PYHNKFRS). Residues 444–464 (LNMVSECLFSLINGDDMFATF) constitute an intramembrane region (pore-forming). The short motif at 456 to 459 (NGDD) is the Selectivity filter element. The Extracellular segment spans residues 465-475 (AKMQQKSYLVW). Residues 476–497 (LFSRIYLYSFISLFIYMILSLF) form a helical membrane-spanning segment. Topologically, residues 498 to 553 (IALITDTYETIKHYQQDGFPETELRTFISECKDLPNSGKFRLEDDPPVSLFCCCKK) are cytoplasmic.

The protein belongs to the transient receptor (TC 1.A.4) family. Polycystin subfamily. MCOLN3 sub-subfamily. Homotetramer. Can heterooligomerize with MCOLN1; heteromeric assemblies have different channel properties as compared to the respective homooligomers and may be tissue-specific. May heterooligomerize with TRPV5 to form a functional distinct ion channel. Interacts with GABARAPL2. In terms of processing, N-glycosylated.

The protein resides in the lysosome membrane. It is found in the early endosome membrane. The protein localises to the late endosome membrane. Its subcellular location is the cytoplasmic vesicle. It localises to the autophagosome membrane. The protein resides in the cell projection. It is found in the stereocilium membrane. It catalyses the reaction Ca(2+)(in) = Ca(2+)(out). It carries out the reaction Mg(2+)(in) = Mg(2+)(out). The catalysed reaction is K(+)(in) = K(+)(out). The enzyme catalyses Na(+)(in) = Na(+)(out). Its activity is regulated as follows. Channel activity is activated by PtdIns(3,5)P2 (phosphatidylinositol 3,5-bisphosphate). Inhibited by lumenal H(+) and Na(+). The channel pore shows dynamic behavior and undergoes spontaneous, Ca(2+)-dependent modulation when conducting Ca(2+). Its function is as follows. Nonselective cation channel probably playing a role in the regulation of membrane trafficking events. Acts as a Ca(2+)-permeable cation channel with inwardly rectifying activity. Mediates release of Ca(2+) from endosomes to the cytoplasm, contributes to endosomal acidification and is involved in the regulation of membrane trafficking and fusion in the endosomal pathway. Also permeable to Mg(2+), Na(+) and K(+). Does not seem to act as mechanosensory transduction channel in inner ear sensory hair cells. Proposed to play a critical role at the cochlear stereocilia ankle-link region during hair-bundle growth. Involved in the regulation of autophagy. Through association with GABARAPL2 may be involved in autophagosome formation possibly providing Ca(2+) for the fusion process. Through a possible and probably tissue-specific heteromerization with MCOLN1 may be at least in part involved in many lysosome-dependent cellular events. Possible heteromeric ion channel assemblies with TRPV5 show pharmacological similarity with TRPML3. The polypeptide is Mucolipin-3 (Callithrix jacchus (White-tufted-ear marmoset)).